The following is a 427-amino-acid chain: 5'-deoxyadenosine deaminase (427 aa).

Residues histidine 62 and histidine 64 each coordinate Zn(2+). Glutamate 91 and histidine 183 together coordinate substrate. Histidine 210 contributes to the Zn(2+) binding site. 2 residues coordinate substrate: glutamate 213 and aspartate 298. Aspartate 298 is a binding site for Zn(2+).

This sequence belongs to the metallo-dependent hydrolases superfamily. MTA/SAH deaminase family. Homotetramer. Requires Zn(2+) as cofactor.

The enzyme catalyses 5'-deoxyadenosine + H2O + H(+) = 5'-deoxyinosine + NH4(+). It carries out the reaction S-adenosyl-L-homocysteine + H2O + H(+) = S-inosyl-L-homocysteine + NH4(+). It catalyses the reaction S-methyl-5'-thioadenosine + H2O + H(+) = S-methyl-5'-thioinosine + NH4(+). The catalysed reaction is adenosine + H2O + H(+) = inosine + NH4(+). It functions in the pathway amino-acid biosynthesis; S-adenosyl-L-methionine biosynthesis. Its function is as follows. Catalyzes the deamination of three SAM-derived enzymatic products, namely 5'-deoxyadenosine, S-adenosyl-L-homocysteine, and 5'-methylthioadenosine, to produce the inosine analogs. Can also deaminate adenosine. The preferred substrate for this enzyme is 5'-deoxyadenosine, but all these substrates are efficiently deaminated. Likely functions in a S-adenosyl-L-methionine (SAM) recycling pathway from S-adenosyl-L-homocysteine (SAH) produced from SAM-dependent methylation reactions. May also be involved in the recycling of 5'-deoxyadenosine, whereupon the 5'-deoxyribose moiety of 5'-deoxyinosine is further metabolized to deoxyhexoses used for the biosynthesis of aromatic amino acids in methanogens. The sequence is that of 5'-deoxyadenosine deaminase from Methanothermobacter thermautotrophicus (strain ATCC 29096 / DSM 1053 / JCM 10044 / NBRC 100330 / Delta H) (Methanobacterium thermoautotrophicum).